Reading from the N-terminus, the 417-residue chain is Gamma-glutamyl phosphate reductase (417 aa).

The protein belongs to the gamma-glutamyl phosphate reductase family.

The protein localises to the cytoplasm. It catalyses the reaction L-glutamate 5-semialdehyde + phosphate + NADP(+) = L-glutamyl 5-phosphate + NADPH + H(+). The protein operates within amino-acid biosynthesis; L-proline biosynthesis; L-glutamate 5-semialdehyde from L-glutamate: step 2/2. Its function is as follows. Catalyzes the NADPH-dependent reduction of L-glutamate 5-phosphate into L-glutamate 5-semialdehyde and phosphate. The product spontaneously undergoes cyclization to form 1-pyrroline-5-carboxylate. This Escherichia coli O45:K1 (strain S88 / ExPEC) protein is Gamma-glutamyl phosphate reductase.